Here is a 646-residue protein sequence, read N- to C-terminus: RNA-binding protein RMD9, mitochondrial (646 aa).

Residues 1-14 constitute a mitochondrion transit peptide; it reads MMLRRNAVRSLKTM. The propeptide at 15 to 51 is removed in mature form; it reads EISVSNVVNSGSIAMLRGKLANVVLSDRTYHSSPIFH. A PPR1 repeat occupies 209–238; the sequence is VSGYGATHLLTSFKELSFDDDCIRIWEASK. One copy of the PPR2 repeat lies at 251-282; that stretch reads EPKVVGFMLPLLYAKTRSLTEPNELYNQIIQS. A PPR3 repeat occupies 288-317; the sequence is PNLYSGLIKVFIKAEDYEKALSLFGQLCEK. Residues 323-353 form a PPR4 repeat; the sequence is YGYLIETHLSFIGDSKNLTLAESFFDKIIND. The PPR5 repeat unit spans residues 363 to 394; sequence VSTVNSFLQNIWKAQNDFDHVYRIWEKAVKFY. The PPR6 repeat unit spans residues 401 to 439; the sequence is GILSSLNNTFFTIFFENYINDNINGFRKLQEIITFYSGV. The stretch at 444–473 is one PPR7 repeat; it reads EPFFNVMLTRASIWHERSIIDFIDKNYTLY. The stretch at 481-514 is one PPR8 repeat; the sequence is SYRILLKSLGSIDNTNNEEILDRWLELVKKLNEL.

The protein belongs to the RMD9 family. In terms of assembly, monomer. In terms of processing, phosphorylated. Phosphorylation promotes binding to RNA.

The protein resides in the mitochondrion inner membrane. Functionally, binds the RNA motif 5'-AAUAA[U/C]AUUCUU-3' in the 3'-UTR of mitochondrial mRNAs. Involved in the processing or stability of mitochondrial mRNAs. The protein is RNA-binding protein RMD9, mitochondrial of Saccharomyces cerevisiae (strain ATCC 204508 / S288c) (Baker's yeast).